Here is an 800-residue protein sequence, read N- to C-terminus: Elongation factor G, mitochondrial (800 aa).

The transit peptide at 1 to 59 directs the protein to the mitochondrion; sequence MRVIRAVATLHAGRAAAVRQGVRSVSLGACRAAVETPSLRSAGSQFESRRLFSRSSYLR. In terms of domain architecture, tr-type G spans 99–385; it reads ARVRNIGIAA…AVCDYLPNPN (287 aa). Residues 108–115, 183–187, and 237–240 contribute to the GTP site; these read AHIDSGKT, DTPGH, and NKMD.

The protein belongs to the TRAFAC class translation factor GTPase superfamily. Classic translation factor GTPase family. EF-G/EF-2 subfamily.

The protein resides in the mitochondrion. Its pathway is protein biosynthesis; polypeptide chain elongation. In terms of biological role, mitochondrial GTPase that catalyzes the GTP-dependent ribosomal translocation step during translation elongation. During this step, the ribosome changes from the pre-translocational (PRE) to the post-translocational (POST) state as the newly formed A-site-bound peptidyl-tRNA and P-site-bound deacylated tRNA move to the P and E sites, respectively. Catalyzes the coordinated movement of the two tRNA molecules, the mRNA and conformational changes in the ribosome. This chain is Elongation factor G, mitochondrial (mef1), found in Neurospora crassa (strain ATCC 24698 / 74-OR23-1A / CBS 708.71 / DSM 1257 / FGSC 987).